Consider the following 234-residue polypeptide: Putative gustatory receptor clone PTE38 (234 aa).

A helical transmembrane segment spans residues 1–11; it reads MYLFFSNLSFN. At 12-42 the chain is on the extracellular side; that stretch reads DICIITTTIPKMLMNVQSHDQSITYLGCLSQ. An intrachain disulfide couples C39 to C121. A helical transmembrane segment spans residues 43–62; that stretch reads VYLIVNFGSIESCLLAVMAY. The Cytoplasmic portion of the chain corresponds to 63-84; it reads DRYVAICHPLKYTVIMNHYFCV. Residues 85–105 traverse the membrane as a helical segment; it reads MLLLFACSLALHMCLFHILMV. Topologically, residues 106–138 are extracellular; that stretch reads LILTFCTKTEIPHFFCELAHIIKLTCSDNFINY. The helical transmembrane segment at 139 to 160 threads the bilayer; that stretch reads LLIYTVSVLFFGVHIVGIILSY. Over 161 to 182 the chain is Cytoplasmic; it reads IYTVSSVLRMSLLGGMYKAFST. The helical transmembrane segment at 183 to 202 threads the bilayer; sequence CGSHLSVVSLFYGTGFGVHI. Residues 203 to 212 lie on the Extracellular side of the membrane; that stretch reads SSPLTDSPRK. A helical transmembrane segment spans residues 213 to 234; it reads TVVASVMYTVVTQMHGPFIYSL.

The protein belongs to the G-protein coupled receptor 1 family. As to expression, tongue specific.

It localises to the cell membrane. Possible taste receptor. This is Putative gustatory receptor clone PTE38 from Rattus norvegicus (Rat).